A 132-amino-acid polypeptide reads, in one-letter code: Pro-MCH 1 (132 aa).

An N-terminal signal peptide occupies residues 1–24; the sequence is MRDSVLSVIFALALFLECYTPSMA. An intrachain disulfide couples Cys120 to Cys129.

Belongs to the MCH family. In terms of tissue distribution, pituitary gland. Produced in neurons of lateral basal hypothalamus which project both to the brain and to the neural lobe of the pituitary gland from where MCH is released.

In terms of biological role, plays a role in skin pigmentation by antagonizing the action of melanotropin alpha. Induces melanin concentration within the melanophores. May participate in the control of the hypothalamo-pituitary adrenal gland axis by inhibiting the release of ACTH. This is Pro-MCH 1 (mch1) from Oncorhynchus kisutch (Coho salmon).